Here is a 535-residue protein sequence, read N- to C-terminus: MEDIEGYEPHITQELIDRGHARRMGHLENYFAVLSRQKMYSNFTVYAELNKGVNKRQLMLVLKVLLQKYSTLAHTIIPKHYPHHEAYYSSEEYLSKPFPQHDFIKVISHLEFDDLIMNNQPEYREVMEKISEQFKKDDFKVTNRLIELISPVIIPLGNPKRPNWRLICLPGKDTDGFETWKNFVYVTNHCGSDGVSGSNFFKDLALLFCKIEEKGFDYDEEFIEDQVIIDYDRDYTEISKLPKPITDRIDYKPALTSLPKFFLTTFIYEHCNFKTSSESTLTARYSPSSNANASYNYLLHFSTKQVEQIRAQIKKNVHDGCTLTPFIQACFLVALYRLDKLFTKSLLEYGFDVAIPSNARRFLPNDEELRDSYKYGSNVGGSHYAYLISSFDIPEGDNDKFWSLVEYYYDRFLESYDNGDHLIGLGVLQLDFIVENKNIDSLLANSYLHQQRGGAIISNTGLVSQDTTKPYYVRDLIFSQSAGALRFAFGLNVCSTNVNGMNMDMSVVQGTLRDRGEWESFCKLFYQTIGEFASL.

Positions 19–36 (GHARRMGHLENYFAVLSR) are membrane association. Catalysis depends on charge relay system residues histidine 189 and aspartate 193. The segment at 515–532 (RGEWESFCKLFYQTIGEF) is membrane association.

It belongs to the ATF1 alcohol acetyltransferase family.

The protein resides in the lipid droplet. Its subcellular location is the endoplasmic reticulum membrane. The enzyme catalyses an aliphatic alcohol + acetyl-CoA = an acetyl ester + CoA. Its function is as follows. Can use acetyl-CoA to synthesize acetate esters from various alcohols, producing ethyl acetate, isoamyl acetate, isobutyl acetate, butyl acetate, hexyl acetate, heptyl acetate and octyl acetate. ATF2 seems to play only a minor role in the acetate ester synthesis, compared to ATF1. Plays an active role in the detoxification hydroxysteroids and possibly certain phytochemicals, in association with the efflux pumps PDR5 and SNQ2. This chain is Alcohol O-acetyltransferase 2, found in Saccharomyces cerevisiae (strain ATCC 204508 / S288c) (Baker's yeast).